Reading from the N-terminus, the 119-residue chain is MTRVPRGYIARRRRTKMRSFASNFRGAHLRLNRVITQQVRRAFVSSHRDRGRQKRDFRRLWITRINAATRVYNVFNSYSKLIHNLSKKELILNRKMLAQVAVSNPNNLYTISNKIRIIN.

This sequence belongs to the bacterial ribosomal protein bL20 family.

It is found in the plastid. Its subcellular location is the chloroplast. Its function is as follows. Binds directly to 23S ribosomal RNA and is necessary for the in vitro assembly process of the 50S ribosomal subunit. It is not involved in the protein synthesizing functions of that subunit. In Zea mays (Maize), this protein is Large ribosomal subunit protein bL20c (rpl20).